The chain runs to 436 residues: MDTSNHNQDHDSHVAAQRENDNNYMPPSPSMSESSMIFERNVEDPSYLYKTVSNNAANSLSRQSSRTSLFNHNNSSNRNFHNLSQRSSAVNLHLQPSRTNESIASYQTYNPDFVVQTPLDHRRTLENFVPPALDAGCSIVTDDTTGLDDVDMVYSRRPSTIGLDRALGRTRSLSSQSFDNETSPAHPRSPNDHGSRLLRFYSYADMLSDDNNNNVSNATSTSSTANPLRRPPMQGHYSFSSSLLNSPSHLPSPPSASASPPQHMNFTNPFIISRRYSNTTINNANGGTSAGSTTGAALSRSPSNQQYLLKQQRSPSGSARSRRNSNRPGSAANIMIGKPKSKFHMESSGSEGFSSEEEDNTMIERDKLNLKQKLQSQLAQPPSIANMVNDNHNNTNKHKNTINNNIKNSPAFTNSNPSSKSNSNSTITSMNPDTTK.

The disordered stretch occupies residues 1 to 34 (MDTSNHNQDHDSHVAAQRENDNNYMPPSPSMSES). The segment covering 7–21 (NQDHDSHVAAQREND) has biased composition (basic and acidic residues). 4 positions are modified to phosphoserine: Ser-53, Ser-61, Ser-102, and Ser-172. Disordered regions lie at residues 165 to 195 (RALGRTRSLSSQSFDNETSPAHPRSPNDHGS), 211 to 266 (NNNN…HMNF), 282 to 360 (NNAN…EEDN), and 389 to 436 (NDNH…DTTK). Positions 171-183 (RSLSSQSFDNETS) are enriched in polar residues. 3 stretches are compositionally biased toward low complexity: residues 211–226 (NNNNVSNATSTSSTAN), 238–261 (SFSSSLLNSPSHLPSPPSASASPP), and 282–299 (NNANGGTSAGSTTGAALS). Phosphoserine occurs at positions 299, 301, 303, and 325. Residues 300 to 312 (RSPSNQQYLLKQQ) show a composition bias toward polar residues. The segment covering 401–436 (TINNNIKNSPAFTNSNPSSKSNSNSTITSMNPDTTK) has biased composition (low complexity).

It to yeast MFL3.

The protein localises to the cytoplasm. Its function is as follows. Can suppress the synthetic lethality of the hal3 sit4 double mutation when overexpressed, suggesting that it is involved in the G1-S transition. This Saccharomyces cerevisiae (strain ATCC 204508 / S288c) (Baker's yeast) protein is Protein VHS2 (VHS2).